The following is a 301-amino-acid chain: GTPase Era (301 aa).

The 168-residue stretch at 6–173 folds into the Era-type G domain; sequence KSGFVAIVGR…LEQTNANLEI (168 aa). The tract at residues 14 to 21 is G1; that stretch reads GRPNVGKS. 14–21 is a binding site for GTP; the sequence is GRPNVGKS. The interval 40–44 is G2; that stretch reads QTTRN. A G3 region spans residues 61–64; it reads DTPG. GTP contacts are provided by residues 61–65 and 123–126; these read DTPGI and NKID. Positions 123 to 126 are G4; it reads NKID. The tract at residues 152-154 is G5; sequence ISA. In terms of domain architecture, KH type-2 spans 204 to 282; sequence TREEVPHSVA…FLEVWVKVQK (79 aa).

The protein belongs to the TRAFAC class TrmE-Era-EngA-EngB-Septin-like GTPase superfamily. Era GTPase family. Monomer.

It localises to the cytoplasm. Its subcellular location is the cell membrane. Functionally, an essential GTPase that binds both GDP and GTP, with rapid nucleotide exchange. Plays a role in 16S rRNA processing and 30S ribosomal subunit biogenesis and possibly also in cell cycle regulation and energy metabolism. The protein is GTPase Era of Listeria monocytogenes serotype 4a (strain HCC23).